The following is a 518-amino-acid chain: AarF domain-containing kinase 1 (518 aa).

Positions 149–468 (SFEREPLGTA…SKCCVQSSYA (320 aa)) constitute a Protein kinase domain. ATP-binding positions include 155 to 163 (LGTASLAQV) and lysine 177. The active-site Proton acceptor is the aspartate 309.

Belongs to the protein kinase superfamily. ADCK protein kinase family.

The protein resides in the mitochondrion. In terms of biological role, essential for maintaining mitochondrial cristae formation and mitochondrial function by acting via YME1L to regulate the mitochondrial structural proteins Opa1 and Mitofilin. This function is likely to be kinase-independent. Functions in tracheal development and larval molting probably by acting in sterol modification and/or intracellular lipid trafficking. The action of this enzyme is not yet clear. It is not known if it has protein kinase activity and what type of substrate it would phosphorylate (Ser, Thr or Tyr). This chain is AarF domain-containing kinase 1, found in Drosophila melanogaster (Fruit fly).